The primary structure comprises 172 residues: Large ribosomal subunit protein uL10 (172 aa).

The protein belongs to the universal ribosomal protein uL10 family. In terms of assembly, part of the ribosomal stalk of the 50S ribosomal subunit. The N-terminus interacts with L11 and the large rRNA to form the base of the stalk. The C-terminus forms an elongated spine to which L12 dimers bind in a sequential fashion forming a multimeric L10(L12)X complex.

Functionally, forms part of the ribosomal stalk, playing a central role in the interaction of the ribosome with GTP-bound translation factors. The polypeptide is Large ribosomal subunit protein uL10 (Brucella abortus (strain S19)).